A 446-amino-acid polypeptide reads, in one-letter code: Na(+)-translocating NADH-quinone reductase subunit A (446 aa).

Belongs to the NqrA family. As to quaternary structure, composed of six subunits; NqrA, NqrB, NqrC, NqrD, NqrE and NqrF.

The catalysed reaction is a ubiquinone + n Na(+)(in) + NADH + H(+) = a ubiquinol + n Na(+)(out) + NAD(+). Its function is as follows. NQR complex catalyzes the reduction of ubiquinone-1 to ubiquinol by two successive reactions, coupled with the transport of Na(+) ions from the cytoplasm to the periplasm. NqrA to NqrE are probably involved in the second step, the conversion of ubisemiquinone to ubiquinol. The sequence is that of Na(+)-translocating NADH-quinone reductase subunit A from Pasteurella multocida (strain Pm70).